Reading from the N-terminus, the 245-residue chain is DNA repair protein RecO (245 aa).

It belongs to the RecO family.

Functionally, involved in DNA repair and RecF pathway recombination. The chain is DNA repair protein RecO from Chromobacterium violaceum (strain ATCC 12472 / DSM 30191 / JCM 1249 / CCUG 213 / NBRC 12614 / NCIMB 9131 / NCTC 9757 / MK).